Consider the following 160-residue polypeptide: Small ribosomal subunit protein uS7 (160 aa).

It belongs to the universal ribosomal protein uS7 family. In terms of assembly, part of the 30S ribosomal subunit. Contacts proteins S9 and S11.

Its function is as follows. One of the primary rRNA binding proteins, it binds directly to 16S rRNA where it nucleates assembly of the head domain of the 30S subunit. Is located at the subunit interface close to the decoding center, probably blocks exit of the E-site tRNA. This is Small ribosomal subunit protein uS7 from Rickettsia massiliae (strain Mtu5).